A 952-amino-acid chain; its full sequence is uncharacterized protein (952 aa).

Residues 1 to 141 form the CheB-type methylesterase domain; that stretch reads MASLLARHTK…PWIADYLIRR (141 aa). The CheR-type methyltransferase domain occupies 168–440; that stretch reads VGQFDGLEPA…SARHRIWQAL (273 aa). Polar residues predominate over residues 923–935; that stretch reads HNQTEASPETSSG. The segment at 923–952 is disordered; sequence HNQTEASPETSSGGLPGSDGTGADGGAPRA. Positions 936–952 are enriched in gly residues; that stretch reads GLPGSDGTGADGGAPRA.

This is an uncharacterized protein from Rhodobacter capsulatus (Rhodopseudomonas capsulata).